A 337-amino-acid polypeptide reads, in one-letter code: Methionyl-tRNA formyltransferase (337 aa).

110-113 (SLLP) is a binding site for (6S)-5,6,7,8-tetrahydrofolate.

Belongs to the Fmt family.

The enzyme catalyses L-methionyl-tRNA(fMet) + (6R)-10-formyltetrahydrofolate = N-formyl-L-methionyl-tRNA(fMet) + (6S)-5,6,7,8-tetrahydrofolate + H(+). Attaches a formyl group to the free amino group of methionyl-tRNA(fMet). The formyl group appears to play a dual role in the initiator identity of N-formylmethionyl-tRNA by promoting its recognition by IF2 and preventing the misappropriation of this tRNA by the elongation apparatus. The protein is Methionyl-tRNA formyltransferase of Frankia casuarinae (strain DSM 45818 / CECT 9043 / HFP020203 / CcI3).